We begin with the raw amino-acid sequence, 498 residues long: Pentatricopeptide repeat-containing protein At3g61360 (498 aa).

PPR repeat units follow at residues Thr-102–Asp-132, Ser-138–Lys-172, Gly-175–Arg-205, Asp-209–Pro-243, Asn-244–Ile-278, Thr-279–Pro-313, Asp-314–Pro-348, Asp-349–Pro-385, and Lys-386–Pro-420.

Belongs to the PPR family. P subfamily.

In Arabidopsis thaliana (Mouse-ear cress), this protein is Pentatricopeptide repeat-containing protein At3g61360.